Here is a 507-residue protein sequence, read N- to C-terminus: MSVRRRTHSDDFSFRLERTRRPSKLDVLRESPTLPVQQGYSLTTVVLVSLVVTLVCQNVAPPAFSYLNQLIKNSPKRKIPGQSNRLNIGFISTNSPEKFAPAVQKPTFLVDPIYDEKWKGVHTAVPVMTTEPEEKRDNNHAKVKEAILAAKAASRSRRDGNLERAVTIMEHAMALAPNNPQILIEMGQIREMHNELVEADQCYVKALAYDPGNSEALVLRARTNPLVSAIDRKMLKTVHDLRNEFAHLQHSTALRRMMRETYFLYVYHTVAIEGNTLSLGQTRAILESGMVIPGKSIREHNEVIGMDAALRFLNCSLLSKEHHEISIDDILEMHRRVLGNADPVEAGKIRTTQVYVGKFTPVAPEYVLEQLADMVDWLNDESTMAMDPIERAAIAHYKLVLVHPFTDGNGRTARLLLNLIMMRSGFPPVILPVETRAEYYASLHVANLGDLRPFVRYVAKHSEASIQRYIGAMKTSSGNVINGEEPNLTAEESKVSEKIETECRAGS.

Residues Tyr-40–Cys-56 form a helical membrane-spanning segment. 2 TPR repeats span residues Ala-146–Asn-179 and Pro-180–Asn-213. Residues Thr-269–Gly-274 carry the Inhibitory (S/T)XXXE(G/N) motif motif. Position 273 (Glu-273) interacts with ATP. A Fido domain is found at Ile-325–Lys-460. Position 351 is an O-AMP-threonine; by autocatalysis (Thr-351). Val-356–Phe-359 contacts ATP. His-403 is an active-site residue. Residues Asp-407–Arg-414, Tyr-439–Tyr-440, and Asn-447 each bind ATP. Thr-475 bears the O-AMP-threonine; by autocatalysis mark. Residues Asn-482–Ser-507 are disordered. Over residues Glu-491–Ser-507 the composition is skewed to basic and acidic residues.

It belongs to the fic family. As to quaternary structure, forms homodimers; homodimerization might be required for adenylyltransferase activity.

It is found in the endoplasmic reticulum membrane. It localises to the nucleus membrane. The catalysed reaction is L-tyrosyl-[protein] + ATP = O-(5'-adenylyl)-L-tyrosyl-[protein] + diphosphate. It carries out the reaction L-threonyl-[protein] + ATP = 3-O-(5'-adenylyl)-L-threonyl-[protein] + diphosphate. It catalyses the reaction 3-O-(5'-adenylyl)-L-threonyl-[protein] + H2O = L-threonyl-[protein] + AMP + H(+). Its activity is regulated as follows. The side chain of Glu-273 determines which of the two opposing activities (AMPylase or de-AMPylase) will take place. In response to endoplasmic reticulum stress, mediates de-AMPylase activity. Adenylyltransferase activity is inhibited by the inhibitory helix present at the N-terminus: Glu-273 binds ATP and competes with ATP-binding at Arg-414, thereby preventing adenylyltransferase activity. In unstressed cells, disengagement of Glu-273 promotes adenylyltransferase activity. Activation dissociates ATP-binding from Glu-273, allowing ordered binding of the entire ATP moiety with the alpha-phosphate in an orientation that is productive for accepting an incoming target hydroxyl side chain. Protein that can both mediate the addition of adenosine 5'-monophosphate (AMP) to specific residues of target proteins (AMPylation), and the removal of the same modification from target proteins (de-AMPylation), depending on the context. The side chain of Glu-273 determines which of the two opposing activities (AMPylase or de-AMPylase) will take place. Adenylyltransferase that mediates the addition of adenosine 5'-monophosphate (AMP) to specific residues of target proteins. In vivo target proteins include the heat-shock 70 family proteins hsp-1 and hsp-3 and the translation elongation factors eef-1A, eef-1G and eef-2. Can AMPylate core histone H3 in vitro. Can also act as a phosphodiesterase by mediating removal of ATP (de-AMPylation) from target proteins. Decreases susceptibility to P.aeruginosa-mediated killing and might therefore play a role in the innate immune response. This is Protein adenylyltransferase fic-1 (fic-1) from Caenorhabditis briggsae.